Here is a 265-residue protein sequence, read N- to C-terminus: Bidirectional sugar transporter NEC1 (265 aa).

Over 1–8 (MAQLRADD) the chain is Extracellular. The helical transmembrane segment at 9 to 29 (LSFIFGLLGNIVSFMVFLAPV) threads the bilayer. In terms of domain architecture, MtN3/slv 1 spans 11–97 (FIFGLLGNIV…SLFLFYAPRK (87 aa)). The Cytoplasmic portion of the chain corresponds to 30–44 (PTFYKIYKRKSSEGY). Residues 45-65 (QAIPYMVALFSAGLLLYYAYL) traverse the membrane as a helical segment. Over 66–71 (RKNAYL) the chain is Extracellular. The helical transmembrane segment at 72–92 (IVSINGFGCAIELTYISLFLF) threads the bilayer. The Cytoplasmic portion of the chain corresponds to 93–103 (YAPRKSKIFTG). Residues 104–124 (WLMLLELGALGMVMPITYLLA) form a helical membrane-spanning segment. Over 125-130 (EGSHRV) the chain is Extracellular. Residues 131 to 151 (MIVGWICAAINVAVFAAPLSI) form a helical membrane-spanning segment. Residues 132 to 216 (IVGWICAAIN…LLYFVYKDSK (85 aa)) enclose the MtN3/slv 2 domain. The Cytoplasmic portion of the chain corresponds to 152 to 164 (MRQVIKTKSVEFM). The chain crosses the membrane as a helical span at residues 165–185 (PFTLSLFLTLCATMWFFYGFF). Over 186-190 (KKDFY) the chain is Extracellular. The chain crosses the membrane as a helical span at residues 191–211 (IAFPNILGFLFGIVQMLLYFV). Topologically, residues 212–265 (YKDSKRIDDEKSDPVREATKSKEGVEIIINIEDDNSDNALQSMEKDFSRLRTSK) are cytoplasmic.

It belongs to the SWEET sugar transporter family. As to quaternary structure, forms homooligomers and/or heterooligomers. Highly expressed in nectary tissue and weakly in the stamen, especially in stomium cells and in the upper part of the filaments.

The protein resides in the cell membrane. Functionally, mediates both low-affinity uptake and efflux of sugar across the plasma membrane. Promotes the formation of phloem bundles in mid-veins. Probably involved in the development of stomium cells that control anther opening time. Required for pollen viability. This is Bidirectional sugar transporter NEC1 (NEC1) from Petunia hybrida (Petunia).